The following is a 109-amino-acid chain: UPF0154 protein UPA3_0273 (109 aa).

The chain crosses the membrane as a helical span at residues 42–62 (VGLGIGIVLFLIAGLIIGYFI).

It belongs to the UPF0154 family.

Its subcellular location is the cell membrane. This chain is UPF0154 protein UPA3_0273, found in Ureaplasma parvum serovar 3 (strain ATCC 27815 / 27 / NCTC 11736).